A 596-amino-acid chain; its full sequence is DNA mismatch repair protein MutL (596 aa).

It belongs to the DNA mismatch repair MutL/HexB family.

Functionally, this protein is involved in the repair of mismatches in DNA. It is required for dam-dependent methyl-directed DNA mismatch repair. May act as a 'molecular matchmaker', a protein that promotes the formation of a stable complex between two or more DNA-binding proteins in an ATP-dependent manner without itself being part of a final effector complex. This Leptospira borgpetersenii serovar Hardjo-bovis (strain L550) protein is DNA mismatch repair protein MutL.